We begin with the raw amino-acid sequence, 630 residues long: 1-deoxy-D-xylulose-5-phosphate synthase (630 aa).

Thiamine diphosphate is bound by residues His-73 and 114-116 (SHA). Residue Asp-146 coordinates Mg(2+). Residues 147–148 (GA), Asn-176, Phe-287, and Glu-371 each bind thiamine diphosphate. Mg(2+) is bound at residue Asn-176.

It belongs to the transketolase family. DXPS subfamily. As to quaternary structure, homodimer. Mg(2+) is required as a cofactor. Requires thiamine diphosphate as cofactor.

It carries out the reaction D-glyceraldehyde 3-phosphate + pyruvate + H(+) = 1-deoxy-D-xylulose 5-phosphate + CO2. Its pathway is metabolic intermediate biosynthesis; 1-deoxy-D-xylulose 5-phosphate biosynthesis; 1-deoxy-D-xylulose 5-phosphate from D-glyceraldehyde 3-phosphate and pyruvate: step 1/1. Functionally, catalyzes the acyloin condensation reaction between C atoms 2 and 3 of pyruvate and glyceraldehyde 3-phosphate to yield 1-deoxy-D-xylulose-5-phosphate (DXP). This is 1-deoxy-D-xylulose-5-phosphate synthase from Corynebacterium jeikeium (strain K411).